We begin with the raw amino-acid sequence, 264 residues long: 3-methyl-2-oxobutanoate hydroxymethyltransferase (264 aa).

Mg(2+) is bound by residues D45 and D84. 3-methyl-2-oxobutanoate is bound by residues 45-46 (DS), D84, and K112. Mg(2+) is bound at residue E114. Residue E181 is the Proton acceptor of the active site.

Belongs to the PanB family. As to quaternary structure, homodecamer; pentamer of dimers. Mg(2+) serves as cofactor.

The protein localises to the cytoplasm. The catalysed reaction is 3-methyl-2-oxobutanoate + (6R)-5,10-methylene-5,6,7,8-tetrahydrofolate + H2O = 2-dehydropantoate + (6S)-5,6,7,8-tetrahydrofolate. Its pathway is cofactor biosynthesis; (R)-pantothenate biosynthesis; (R)-pantoate from 3-methyl-2-oxobutanoate: step 1/2. Functionally, catalyzes the reversible reaction in which hydroxymethyl group from 5,10-methylenetetrahydrofolate is transferred onto alpha-ketoisovalerate to form ketopantoate. The chain is 3-methyl-2-oxobutanoate hydroxymethyltransferase from Shigella dysenteriae serotype 1 (strain Sd197).